A 170-amino-acid polypeptide reads, in one-letter code: Adenine phosphoribosyltransferase (170 aa).

Belongs to the purine/pyrimidine phosphoribosyltransferase family. Homodimer.

It is found in the cytoplasm. It catalyses the reaction AMP + diphosphate = 5-phospho-alpha-D-ribose 1-diphosphate + adenine. The protein operates within purine metabolism; AMP biosynthesis via salvage pathway; AMP from adenine: step 1/1. In terms of biological role, catalyzes a salvage reaction resulting in the formation of AMP, that is energically less costly than de novo synthesis. This chain is Adenine phosphoribosyltransferase, found in Acholeplasma laidlawii (strain PG-8A).